Reading from the N-terminus, the 191-residue chain is Thiol:disulfide interchange protein TxlA (191 aa).

A helical transmembrane segment spans residues 14 to 30 (ILVIAAALVLTILVVLG). In terms of domain architecture, Thioredoxin spans 27–148 (VVLGSRQPSA…LAANLDALVE (122 aa)). A disulfide bridge connects residues cysteine 69 and cysteine 72. The span at 165–185 (SADLQPSRSSQTDPRSHSGQV) shows a compositional bias: polar residues. The interval 165–191 (SADLQPSRSSQTDPRSHSGQVQDGVLD) is disordered.

This sequence belongs to the thioredoxin family.

The protein resides in the cell membrane. In terms of biological role, required for disulfide bond formation in some proteins. Acts by transferring its disulfide bond to other proteins and is reduced in the process. This Synechococcus elongatus (strain ATCC 33912 / PCC 7942 / FACHB-805) (Anacystis nidulans R2) protein is Thiol:disulfide interchange protein TxlA (txlA).